Consider the following 119-residue polypeptide: MRIYETMFIIKPDIAEEEREKIANGVVEFLKEKLNAQIDNVDRWGIRKTAYPLKKYNEADYTVVYFRATGENLNELEMYFKVRPEFLRWQTFRRIDLEKKERKTAKKVETVENTEKVEE.

It belongs to the bacterial ribosomal protein bS6 family.

Binds together with bS18 to 16S ribosomal RNA. The protein is Small ribosomal subunit protein bS6 of Thermosipho africanus (strain TCF52B).